The sequence spans 513 residues: Probable cytosol aminopeptidase (513 aa).

Mn(2+) contacts are provided by Lys-277 and Asp-282. Residue Lys-289 is part of the active site. The Mn(2+) site is built by Asp-300, Asp-359, and Glu-361. The active site involves Arg-363.

This sequence belongs to the peptidase M17 family. Mn(2+) is required as a cofactor.

It is found in the cytoplasm. It catalyses the reaction Release of an N-terminal amino acid, Xaa-|-Yaa-, in which Xaa is preferably Leu, but may be other amino acids including Pro although not Arg or Lys, and Yaa may be Pro. Amino acid amides and methyl esters are also readily hydrolyzed, but rates on arylamides are exceedingly low.. It carries out the reaction Release of an N-terminal amino acid, preferentially leucine, but not glutamic or aspartic acids.. Its function is as follows. Presumably involved in the processing and regular turnover of intracellular proteins. Catalyzes the removal of unsubstituted N-terminal amino acids from various peptides. The chain is Probable cytosol aminopeptidase from Mycobacterium sp. (strain JLS).